Reading from the N-terminus, the 85-residue chain is Small ribosomal subunit protein bS16c (85 aa).

The protein belongs to the bacterial ribosomal protein bS16 family.

It is found in the plastid. Its subcellular location is the chloroplast. The chain is Small ribosomal subunit protein bS16c from Oryza nivara (Indian wild rice).